We begin with the raw amino-acid sequence, 511 residues long: Maturase K (511 aa).

The protein belongs to the intron maturase 2 family. MatK subfamily.

It localises to the plastid. It is found in the chloroplast. Usually encoded in the trnK tRNA gene intron. Probably assists in splicing its own and other chloroplast group II introns. In Mandragora officinarum (Mandrake), this protein is Maturase K.